The primary structure comprises 333 residues: Gap junction alpha-4 protein (333 aa).

The Cytoplasmic portion of the chain corresponds to 1–20 (MGDWGFLEKLLDQVQEHSTV). Residues 21–40 (VGKIWLTVLFIFRILILGLA) form a helical membrane-spanning segment. The Extracellular portion of the chain corresponds to 41–76 (GESVWGDEQSDFECNTAQPGCTNVCYDQAFPISHIR). A helical transmembrane segment spans residues 77 to 99 (YWVLQFLFVSTPTLIYLGHVIYL). The Cytoplasmic portion of the chain corresponds to 100-148 (SRREERLRQKEGELRALPSKDPHVERALAAIEHQMAKISVAEDGRLRIR). Residues 149–171 (GALMGTYVISVLCKSVLEAGFLY) traverse the membrane as a helical segment. At 172–208 (GQWRLYGWTMEPVFVCQRAPCPHVVDCYVSRPTEKTI) the chain is on the extracellular side. Residues 209–231 (FIIFMLVVGVISLVLNLLELVHL) form a helical membrane-spanning segment. The Cytoplasmic portion of the chain corresponds to 232–333 (LCRCVSREIK…NSSASKKQYV (102 aa)). Residues 292 to 333 (ANLTTEERLTSTRPPPFVNAAPQGGQKSSSRPNSSASKKQYV) are disordered. Positions 318–333 (KSSSRPNSSASKKQYV) are enriched in low complexity.

The protein belongs to the connexin family. Alpha-type (group II) subfamily. A connexon is composed of a hexamer of connexins. Highly expressed in lung.

The protein resides in the cell membrane. Its subcellular location is the cell junction. The protein localises to the gap junction. One gap junction consists of a cluster of closely packed pairs of transmembrane channels, the connexons, through which materials of low MW diffuse from one cell to a neighboring cell. This Rattus norvegicus (Rat) protein is Gap junction alpha-4 protein (Gja4).